A 622-amino-acid polypeptide reads, in one-letter code: Low affinity potassium transport system protein Kup (622 aa).

A run of 12 helical transmembrane segments spans residues 9-29 (LPAI…TSPL), 49-69 (VFGF…IKYL), 103-123 (VIMG…TPAI), 137-157 (PQLD…LFMI), 165-185 (VGKL…GLGL), 213-233 (VSFI…ALYA), 247-267 (WFTV…ALLL), 276-296 (PFFL…AALA), 337-357 (IYIP…IVSF), 363-383 (LAAA…ILST), 396-416 (FVAL…TANL), and 419-439 (LLSG…VMTT).

The protein belongs to the HAK/KUP transporter (TC 2.A.72) family.

The protein localises to the cell inner membrane. The enzyme catalyses K(+)(in) + H(+)(in) = K(+)(out) + H(+)(out). Functionally, responsible for the low-affinity transport of potassium into the cell. Likely operates as a K(+):H(+) symporter. This Escherichia coli O157:H7 (strain EC4115 / EHEC) protein is Low affinity potassium transport system protein Kup.